The sequence spans 639 residues: MLDPLYPLFPIFAFLGFVLAILPLPWHLQAWNSGTCFFMMWTALGCLNQFINSVAWADDAMNKAPVWCEISIRILMGASVGIPASSLCIIRRLYYIAKVRAVSKTRAEKMRAILVDALICVLFPLVYIALQYIVQGHRFNILENIGCYPAVTNTPVTYVVSYVWPVLLGLISATYGVMALLQFNKHRLQFSQFLHTHSTLSASRYLRLMALALTEMMCTMPLGIFVIVLNSKTENIQPWVSLAVTHYGFGRIDQVPAIVWRSQHLIVVCNELTRWCAPVSAFIFFFYFGFAEEARRNYAAAWRRVCRALGLPERVPSLPTTKKPFSSSDNKGSGFAEKFAAKAKGFSNFNVKDFTSEFTSKAHDFTSKAKQYTLPRPMPQTLSSSGFSSSDSTRFGSSVDGKELPSPTTKEFSSPIPIHLSGMQTLASFDSNKDLPSPPAYDIEAQYGPYNIDNRVSYHIADTGVRASYPMGVAYSSDSEHRRIVPHHSTVPHHSTADEPASPALPDTPSSCSSSATFSTLQSRDFIVLPSSADVTRRDSGSSAGGVASTSRPTRAGPPRLPSLSQLFGISSMRGQEGDVEAQGEEMAADVDVSEMVLDTLAPASIIAATTTAGAPATTTPDRGEPDVPTSPRTHRASV.

7 helical membrane-spanning segments follow: residues 8–28, 37–57, 70–90, 113–133, 163–183, 209–229, and 272–292; these read LFPIFAFLGFVLAILPLPWHL, FFMMWTALGCLNQFINSVAWA, ISIRILMGASVGIPASSLCII, ILVDALICVLFPLVYIALQYI, VWPVLLGLISATYGVMALLQF, MALALTEMMCTMPLGIFVIVL, and LTRWCAPVSAFIFFFYFGFAE. 4 disordered regions span residues 375 to 416, 490 to 516, 532 to 563, and 611 to 639; these read PRPM…SSPI, TVPHHSTADEPASPALPDTPSSCSSSA, SADVTRRDSGSSAGGVASTSRPTRAGPPRLPS, and TTAGAPATTTPDRGEPDVPTSPRTHRASV. Residues 383–398 are compositionally biased toward low complexity; sequence SSSGFSSSDSTRFGSS. Low complexity-rich tracts occupy residues 541–551 and 611–621; these read GSSAGGVASTS and TTAGAPATTTP.

This sequence belongs to the G-protein coupled receptor 4 family.

It is found in the membrane. Functionally, receptor for the BAP1 pheromone, a prenylated mating factor. Has a role in the initiation of B-regulated nuclear migration. This Schizophyllum commune (Split gill fungus) protein is Pheromone B alpha 1 receptor (BAR1).